We begin with the raw amino-acid sequence, 714 residues long: Polyribonucleotide nucleotidyltransferase (714 aa).

Mg(2+) is bound by residues D488 and D494. Residues 555 to 614 (PRIEVMNIPTDKIRDVIGSGGKVIREIVEKTGAKINIEDDGTVKIASSNGKEIEAAKKWI) form the KH domain. Residues 624-692 (GEIYEGTVVK…ERGKVRLSMK (69 aa)) enclose the S1 motif domain.

Belongs to the polyribonucleotide nucleotidyltransferase family. Requires Mg(2+) as cofactor.

It localises to the cytoplasm. It carries out the reaction RNA(n+1) + phosphate = RNA(n) + a ribonucleoside 5'-diphosphate. Involved in mRNA degradation. Catalyzes the phosphorolysis of single-stranded polyribonucleotides processively in the 3'- to 5'-direction. This chain is Polyribonucleotide nucleotidyltransferase, found in Brucella melitensis biotype 2 (strain ATCC 23457).